Consider the following 361-residue polypeptide: Ribosomal RNA large subunit methyltransferase M (361 aa).

S-adenosyl-L-methionine is bound by residues Ser-187, 220–223 (CPGG), Asp-239, Asp-259, and Asp-276. The active-site Proton acceptor is the Lys-305.

This sequence belongs to the class I-like SAM-binding methyltransferase superfamily. RNA methyltransferase RlmE family. RlmM subfamily. As to quaternary structure, monomer.

It localises to the cytoplasm. It carries out the reaction cytidine(2498) in 23S rRNA + S-adenosyl-L-methionine = 2'-O-methylcytidine(2498) in 23S rRNA + S-adenosyl-L-homocysteine + H(+). Its function is as follows. Catalyzes the 2'-O-methylation at nucleotide C2498 in 23S rRNA. This Shewanella sp. (strain MR-4) protein is Ribosomal RNA large subunit methyltransferase M.